Consider the following 788-residue polypeptide: Leucine-rich repeat and fibronectin type-III domain-containing protein 2 (788 aa).

The N-terminal stretch at 1–20 is a signal peptide; the sequence is METLLGGLLAFGMAFAVVDA. Residues 21–52 enclose the LRRNT domain; that stretch reads CPKYCVCQNLSESLGTLCPSKGLLFVPPDIDR. Topologically, residues 21-534 are extracellular; that stretch reads CPKYCVCQNL…MHSQILGGTM (514 aa). N-linked (GlcNAc...) asparagine glycosylation is present at N29. LRR repeat units follow at residues 53–74, 77–98, 101–122, 125–146, 150–171, 174–195, and 198–219; these read RTVELRLGGNFIIHIGRQDFAN, GLVDLTLSRNTISHIQPFSFLD, SLRSLHLDSNRLPSLGEDTLRG, NLQHLIVNNNQLGGIADDAFED, TLEDLDLSYNNLHGLPWDSVRR, NLHQLSLDHNLLDHIAEGTFAD, and KLARLDLTSNRLQKLPPDPIFA. The LRRCT domain maps to 242–288; that stretch reads NPLHCNCELLWLRRLERDDDLETCGSPGSLKGRYFWHIREEEFVCEP. The region spanning 289–375 is the Ig-like domain; it reads PLITQHTHKL…GEATATVEVS (87 aa). A disulfide bond links C310 and C359. N-linked (GlcNAc...) asparagine glycosylation is found at N332, N341, and N384. The interval 383-423 is disordered; that stretch reads SNSTSRMAPPKSRLSDITGSSKTSRGGGGSGAGEPPKSTPE. Residues 422 to 518 form the Fibronectin type-III domain; that stretch reads PERAVLVSDV…GCAQFFTKAD (97 aa). Residues 535–555 form a helical membrane-spanning segment; the sequence is ILVIGGIIVATLLVFIVILMV. At 556 to 788 the chain is on the cytoplasmic side; it reads RYKVCNHDTP…SSEWVMESTV (233 aa). The segment covering 620–631 has biased composition (low complexity); it reads CDSSSSSSLGSG. Disordered stretches follow at residues 620 to 655 and 668 to 711; these read CDSSSSSSLGSGEAAGLGRGPWRLPPPAPRPKPSLD and SQRK…RSLL. Residues 642-651 show a composition bias toward pro residues; it reads RLPPPAPRPK. Positions 785–788 match the PDZ-binding motif; sequence ESTV.

Belongs to the LRFN family. Forms heteromeric complexes with LRFN1, LRFN3, LRFN4 and LRFN5. Can form homomeric complexes, but not across cell junctions. Interacts with DLG4. Directly interacts with DLG1, DLG2 and DLG3. Directly interacts with 2 NMDA receptor subunits GRIN1 and GRIN2A. Glycosylated. In terms of tissue distribution, predominantly expressed in the brain, with a weak, but broad expression in the cerebral cortex and diencephalic nuclei. Strongly expressed in both the pyramidal layer and the dentate gyrus of the hippocampus. Also detected in other parts of the central nervous system, including the olfactory bulb, pons, cerebellum, and medulla oblongata, as well as in the peripheral nervous system, such as the ganglia of cranial nerves and the dorsal root ganglion during gestation.

It is found in the membrane. The protein resides in the synapse. The protein localises to the postsynaptic cell membrane. In terms of biological role, promotes neurite outgrowth in hippocampal neurons. Enhances the cell surface expression of 2 NMDA receptor subunits GRIN1 and GRIN2A. May play a role in redistributing DLG4 to the cell periphery. The chain is Leucine-rich repeat and fibronectin type-III domain-containing protein 2 (Lrfn2) from Mus musculus (Mouse).